The chain runs to 198 residues: Probable GTP-binding protein EngB (198 aa).

The EngB-type G domain occupies 22 to 195 (DLPEIALAGR…WKAIHKFTKT (174 aa)). GTP-binding positions include 30 to 37 (GRSNVGKS), 57 to 61 (GKTQT), 75 to 78 (DVPG), 142 to 145 (TKAD), and 174 to 176 (FSS). Mg(2+) contacts are provided by serine 37 and threonine 59.

Belongs to the TRAFAC class TrmE-Era-EngA-EngB-Septin-like GTPase superfamily. EngB GTPase family. Requires Mg(2+) as cofactor.

In terms of biological role, necessary for normal cell division and for the maintenance of normal septation. The sequence is that of Probable GTP-binding protein EngB from Bacillus cytotoxicus (strain DSM 22905 / CIP 110041 / 391-98 / NVH 391-98).